A 219-amino-acid chain; its full sequence is Ribose-5-phosphate isomerase A (219 aa).

Substrate-binding positions include 28-31 (TGST), 81-84 (DGAD), and 94-97 (KGGG). The Proton acceptor role is filled by E103. K121 lines the substrate pocket.

It belongs to the ribose 5-phosphate isomerase family. As to quaternary structure, homodimer.

It catalyses the reaction aldehydo-D-ribose 5-phosphate = D-ribulose 5-phosphate. It participates in carbohydrate degradation; pentose phosphate pathway; D-ribose 5-phosphate from D-ribulose 5-phosphate (non-oxidative stage): step 1/1. In terms of biological role, catalyzes the reversible conversion of ribose-5-phosphate to ribulose 5-phosphate. The sequence is that of Ribose-5-phosphate isomerase A from Salmonella arizonae (strain ATCC BAA-731 / CDC346-86 / RSK2980).